The following is a 918-amino-acid chain: Isoleucine--tRNA ligase (918 aa).

The 'HIGH' region motif lies at 57-67 (PYANGDIHIGH). Glutamate 568 is a binding site for L-isoleucyl-5'-AMP. A 'KMSKS' region motif is present at residues 609-613 (KMSKS). Residue lysine 612 participates in ATP binding. Zn(2+)-binding residues include cysteine 894, cysteine 897, cysteine 909, and cysteine 912.

Belongs to the class-I aminoacyl-tRNA synthetase family. IleS type 1 subfamily. Monomer. Zn(2+) is required as a cofactor.

Its subcellular location is the cytoplasm. It carries out the reaction tRNA(Ile) + L-isoleucine + ATP = L-isoleucyl-tRNA(Ile) + AMP + diphosphate. Catalyzes the attachment of isoleucine to tRNA(Ile). As IleRS can inadvertently accommodate and process structurally similar amino acids such as valine, to avoid such errors it has two additional distinct tRNA(Ile)-dependent editing activities. One activity is designated as 'pretransfer' editing and involves the hydrolysis of activated Val-AMP. The other activity is designated 'posttransfer' editing and involves deacylation of mischarged Val-tRNA(Ile). The polypeptide is Isoleucine--tRNA ligase (Sulfurovum sp. (strain NBC37-1)).